Reading from the N-terminus, the 608-residue chain is Glutamyl-tRNA(Gln) amidotransferase subunit E (608 aa).

Positions 401-428 (PEETRAANPDGTTRFLRPRPGAARMYPE) are disordered.

This sequence belongs to the GatB/GatE family. GatE subfamily. Heterodimer of GatD and GatE.

It carries out the reaction L-glutamyl-tRNA(Gln) + L-glutamine + ATP + H2O = L-glutaminyl-tRNA(Gln) + L-glutamate + ADP + phosphate + H(+). Allows the formation of correctly charged Gln-tRNA(Gln) through the transamidation of misacylated Glu-tRNA(Gln) in organisms which lack glutaminyl-tRNA synthetase. The reaction takes place in the presence of glutamine and ATP through an activated gamma-phospho-Glu-tRNA(Gln). The GatDE system is specific for glutamate and does not act on aspartate. This Pyrobaculum arsenaticum (strain DSM 13514 / JCM 11321 / PZ6) protein is Glutamyl-tRNA(Gln) amidotransferase subunit E.